Reading from the N-terminus, the 111-residue chain is COX assembly mitochondrial protein (111 aa).

In terms of domain architecture, CHCH spans 39 to 82 (YKKCANFVQAMADCAKANGMKVFPTCDKQRDEMKSCLLFYQTDE). 2 consecutive short sequence motifs (cx9C motif) follow at residues 42–52 (CANFVQAMADC) and 64–74 (CDKQRDEMKSC). Intrachain disulfides connect cysteine 42–cysteine 74 and cysteine 52–cysteine 64.

The protein belongs to the CMC family.

The protein localises to the mitochondrion inner membrane. Its function is as follows. Required for mitochondrial cytochrome c oxidase (COX) assembly and respiration. Binds copper. May be involved in copper trafficking and distribution to mitochondrial COX and SOD1. The polypeptide is COX assembly mitochondrial protein (CMC1) (Saccharomyces cerevisiae (strain RM11-1a) (Baker's yeast)).